A 126-amino-acid chain; its full sequence is Large ribosomal subunit protein bL17 (126 aa).

The protein belongs to the bacterial ribosomal protein bL17 family. Part of the 50S ribosomal subunit. Contacts protein L32.

In Xylella fastidiosa (strain M12), this protein is Large ribosomal subunit protein bL17.